The following is a 171-amino-acid chain: Zinc uptake regulation protein (171 aa).

The protein belongs to the Fur family.

In terms of biological role, acts as a negative controlling element, employing Zn(2+) as a cofactor to bind the operator of the repressed genes (znuACB). The polypeptide is Zinc uptake regulation protein (zur) (Escherichia coli (strain K12)).